Consider the following 493-residue polypeptide: Glutamyl-tRNA(Gln) amidotransferase subunit A (493 aa).

Catalysis depends on charge relay system residues Lys79 and Ser159. Ser183 functions as the Acyl-ester intermediate in the catalytic mechanism.

It belongs to the amidase family. GatA subfamily. In terms of assembly, heterotrimer of A, B and C subunits.

The enzyme catalyses L-glutamyl-tRNA(Gln) + L-glutamine + ATP + H2O = L-glutaminyl-tRNA(Gln) + L-glutamate + ADP + phosphate + H(+). Its function is as follows. Allows the formation of correctly charged Gln-tRNA(Gln) through the transamidation of misacylated Glu-tRNA(Gln) in organisms which lack glutaminyl-tRNA synthetase. The reaction takes place in the presence of glutamine and ATP through an activated gamma-phospho-Glu-tRNA(Gln). This is Glutamyl-tRNA(Gln) amidotransferase subunit A from Brucella melitensis biotype 2 (strain ATCC 23457).